A 79-amino-acid chain; its full sequence is Sulfur carrier protein TusA (79 aa).

Catalysis depends on C17, which acts as the Cysteine persulfide intermediate.

Belongs to the sulfur carrier protein TusA family.

It is found in the cytoplasm. In terms of biological role, sulfur carrier protein which probably makes part of a sulfur-relay system. The protein is Sulfur carrier protein TusA of Haemophilus ducreyi (strain 35000HP / ATCC 700724).